The sequence spans 88 residues: Small ribosomal subunit protein bS20 (88 aa).

The span at 1–23 (MPNTKSAEKALRVADANRQENRR) shows a compositional bias: basic and acidic residues. 2 disordered regions span residues 1–28 (MPNT…KSQV) and 69–88 (PKNA…QAAK). The segment covering 71 to 81 (NAARRKSRLMK) has biased composition (basic residues).

This sequence belongs to the bacterial ribosomal protein bS20 family.

Binds directly to 16S ribosomal RNA. This Dehalococcoides mccartyi (strain ATCC BAA-2266 / KCTC 15142 / 195) (Dehalococcoides ethenogenes (strain 195)) protein is Small ribosomal subunit protein bS20.